The following is a 441-amino-acid chain: Ribulose bisphosphate carboxylase large chain (441 aa).

N6,N6,N6-trimethyllysine is present on lysine 5. 2 residues coordinate substrate: asparagine 114 and threonine 164. The Proton acceptor role is filled by lysine 166. Lysine 168 is a binding site for substrate. Residues lysine 192, aspartate 194, and glutamate 195 each coordinate Mg(2+). Lysine 192 is subject to N6-carboxylysine. Histidine 285 (proton acceptor) is an active-site residue. Substrate-binding residues include arginine 286, histidine 318, and serine 370.

The protein belongs to the RuBisCO large chain family. Type I subfamily. As to quaternary structure, heterohexadecamer of 8 large chains and 8 small chains; disulfide-linked. The disulfide link is formed within the large subunit homodimers. Mg(2+) is required as a cofactor. Post-translationally, the disulfide bond which can form in the large chain dimeric partners within the hexadecamer appears to be associated with oxidative stress and protein turnover.

It localises to the plastid. The protein resides in the chloroplast. It catalyses the reaction 2 (2R)-3-phosphoglycerate + 2 H(+) = D-ribulose 1,5-bisphosphate + CO2 + H2O. The catalysed reaction is D-ribulose 1,5-bisphosphate + O2 = 2-phosphoglycolate + (2R)-3-phosphoglycerate + 2 H(+). Its function is as follows. RuBisCO catalyzes two reactions: the carboxylation of D-ribulose 1,5-bisphosphate, the primary event in carbon dioxide fixation, as well as the oxidative fragmentation of the pentose substrate in the photorespiration process. Both reactions occur simultaneously and in competition at the same active site. The protein is Ribulose bisphosphate carboxylase large chain of Argyrochosma delicatula (Delicate cloak fern).